Here is a 239-residue protein sequence, read N- to C-terminus: 2',3'-cyclic-nucleotide 3'-phosphodiesterase (239 aa).

Active-site proton donor/acceptor residues include His39 and His150.

Belongs to the 2H phosphoesterase superfamily. CPD1 family.

The protein resides in the golgi apparatus. The enzyme catalyses ADP-alpha-D-ribose 1'',2''-cyclic phosphate + H2O = ADP-alpha-D-ribose 1''-phosphate + H(+). It catalyses the reaction 2',3'-cyclophospho-AMP + H2O = adenosine 2'-phosphate + H(+). It carries out the reaction 2',3'-cyclophospho-GMP + H2O = guanosine 2'-phosphate + H(+). The catalysed reaction is 2',3'-cyclophospho-UMP + H2O = uridine 2'-phosphate + H(+). The enzyme catalyses 2',3'-cyclophospho-CMP + H2O = cytidine 2'-phosphate + H(+). It catalyses the reaction a nucleoside 2',3'-cyclic phosphate + H2O = a nucleoside 2'-phosphate + H(+). In terms of biological role, involved in the metabolism of ADP-ribose 1',2'-cyclic phosphate which is produced as a consequence of tRNA splicing. This is 2',3'-cyclic-nucleotide 3'-phosphodiesterase from Saccharomyces cerevisiae (strain ATCC 204508 / S288c) (Baker's yeast).